The chain runs to 352 residues: Zinc finger protein 185 (352 aa).

Disordered regions lie at residues 1–73 and 86–121; these read MTTE…ELQS and DVLP…ITPP. S18 bears the Phosphoserine mark. Residues 61–72 show a composition bias toward polar residues; that stretch reads KKTTSSPTQELQ. T137 is modified (phosphothreonine). Residues 251–268 are compositionally biased toward polar residues; it reads VSSGKPVSSHCDSPSSIE. The interval 251–287 is disordered; it reads VSSGKPVSSHCDSPSSIEDSLDLAKKPPHEGTPSERP. Over residues 272–287 the composition is skewed to basic and acidic residues; it reads DLAKKPPHEGTPSERP. Residues 292 to 347 form the LIM zinc-binding domain; sequence CTYCSHEIQDCPKITLEHLGICCHEYCFKCGICNKPMGDLLDQIFIHRDTIHCGKC.

Expressed in skin, kidney, ovary, testis. Also expressed in brain, cartilage, heart, lung, spleen and thymus.

The protein resides in the cytoplasm. It is found in the cytoskeleton. The protein localises to the cell junction. Its subcellular location is the focal adhesion. Functionally, may be involved in the regulation of cellular proliferation and/or differentiation. The chain is Zinc finger protein 185 (Znf185) from Mus musculus (Mouse).